A 388-amino-acid polypeptide reads, in one-letter code: Type II secretion system protein F (388 aa).

The interval 1-28 is disordered; that stretch reads MTEGDSARQVRQQLREQGLTPLEVNETT. The Cytoplasmic segment spans residues 1 to 153; the sequence is MTEGDSARQV…HMRTKLLQAM (153 aa). The Ca(2+) site is built by Glu-79, Asn-133, and Asp-137. Residues 154–174 traverse the membrane as a helical segment; the sequence is IYPIVLTLVAVGVISILLTAV. Residues 175-205 are Periplasmic-facing; the sequence is VPKVVAQFEHMGQQLPATTRFLIGTSELMQH. A helical transmembrane segment spans residues 206 to 226; the sequence is YGLWFLLLLFIGGFVWRWWLT. The Cytoplasmic segment spans residues 227–350; that stretch reads DEKRRRHWHQ…QDREFETQVN (124 aa). The chain crosses the membrane as a helical span at residues 351-371; the sequence is IALGVFEPLLVVSMAGVVLFI. Over 372 to 388 the chain is Periplasmic; that stretch reads VMSILQPILELNNMVNL.

It belongs to the GSP F family. Type II secretion system is composed of four main components: the outer membrane complex, the inner membrane complex, the cytoplasmic secretion ATPase and the periplasm-spanning pseudopilus. Homodimer. Interacts with ExeE and ExeL components.

The protein resides in the cell inner membrane. Its function is as follows. Component of the type II secretion system inner membrane complex required for the energy-dependent secretion of extracellular factors such as proteases and toxins from the periplasm. This is Type II secretion system protein F (exeF) from Aeromonas hydrophila.